We begin with the raw amino-acid sequence, 144 residues long: Large ribosomal subunit protein uL15 (144 aa).

The disordered stretch occupies residues 1 to 56 (MELNNLKPAAGAKHAKRRVGRGIGSGLGKTAGRGHKGQKSRSGGFHKVGFEGGQMP). Residues 21–31 (RGIGSGLGKTA) are compositionally biased toward gly residues.

Belongs to the universal ribosomal protein uL15 family. In terms of assembly, part of the 50S ribosomal subunit.

Binds to the 23S rRNA. This chain is Large ribosomal subunit protein uL15, found in Burkholderia multivorans (strain ATCC 17616 / 249).